A 1085-amino-acid polypeptide reads, in one-letter code: Ubiquitin carboxyl-terminal hydrolase 36 (1085 aa).

The segment covering Gly-23–Ala-36 has biased composition (low complexity). Disordered regions lie at residues Gly-23–Gln-47 and Lys-104–Lys-149. The USP domain maps to Thr-173–Asp-481. The Nucleophile role is filled by Cys-182. His-440 acts as the Proton acceptor in catalysis. Disordered regions lie at residues Ala-489–Lys-730, Lys-745–Lys-888, Glu-963–Gln-1030, and Lys-1043–Ser-1085. Low complexity predominate over residues Ser-503–Thr-518. Ser-514 and Ser-516 each carry phosphoserine. Positions Gly-532–Ala-542 are enriched in polar residues. Over residues Asn-588–Asn-609 the composition is skewed to low complexity. Residues Met-642 to Lys-651 show a composition bias toward basic and acidic residues. 2 positions are modified to phosphothreonine: Thr-660 and Thr-664. A phosphoserine mark is found at Ser-674 and Ser-676. Over residues Thr-705–Lys-730 the composition is skewed to polar residues. Ser-749 carries the phosphoserine modification. Acidic residues predominate over residues Ser-749–Ser-758. The span at Pro-768–Ala-778 shows a compositional bias: low complexity. Residues Pro-779–Pro-788 are compositionally biased toward pro residues. Phosphoserine is present on Ser-781. Thr-784 bears the Phosphothreonine mark. A Phosphoserine modification is found at Ser-787. Residues Glu-805–Glu-818 show a composition bias toward acidic residues. Residues Lys-822–Pro-844 are compositionally biased toward polar residues. Residue Thr-825 is modified to Phosphothreonine. Ser-843 bears the Phosphoserine mark. At Thr-846 the chain carries Phosphothreonine. Residues Pro-859–Asn-884 are compositionally biased toward polar residues. 2 stretches are compositionally biased toward low complexity: residues Ser-987 to Ser-998 and Gln-1056 to Ala-1066.

This sequence belongs to the peptidase C19 family. In terms of assembly, interacts with atms/PAF1, but not with CycT.

It localises to the nucleus. Its subcellular location is the nucleolus. It carries out the reaction Thiol-dependent hydrolysis of ester, thioester, amide, peptide and isopeptide bonds formed by the C-terminal Gly of ubiquitin (a 76-residue protein attached to proteins as an intracellular targeting signal).. Functionally, required for maintaining multiple types of adult stem cells, including male and female germline, epithelial follicle cell and intestinal stem cells. May function as a transcriptional repressor by continually deubiquiting histone H2B at the promoters of genes critical for cellular differentiation, thereby preventing histone H3 'Lys-4' trimethylation (H3K4). Controls selective autophagy activation by ubiquitinated proteins. The chain is Ubiquitin carboxyl-terminal hydrolase 36 (Usp36) from Drosophila erecta (Fruit fly).